The chain runs to 68 residues: UPF0253 protein ASA_2184 (68 aa).

This sequence belongs to the UPF0253 family.

The chain is UPF0253 protein ASA_2184 from Aeromonas salmonicida (strain A449).